The primary structure comprises 65 residues: Toxin KTx8 (65 aa).

The first 25 residues, 1–25, serve as a signal peptide directing secretion; that stretch reads MNKVCFVVVLVLFVALAAYVSPIEG. 3 disulfide bridges follow: cysteine 31–cysteine 53, cysteine 38–cysteine 61, and cysteine 42–cysteine 63.

The protein belongs to the short scorpion toxin superfamily. Potassium channel inhibitor family. Alpha-KTx 11 subfamily. In terms of tissue distribution, expressed by the venom gland.

The protein resides in the secreted. This recombinant toxin inhibits the mammalian voltage-gated potassium channels Kv1.3/KCNA3 in vitro with an IC(50) of 26.40 nM. The chain is Toxin KTx8 from Lychas mucronatus (Chinese swimming scorpion).